The chain runs to 389 residues: Apicidin F cluster transcription factor apf2 (389 aa).

2 stretches are compositionally biased toward polar residues: residues 1–13 (MSPP…TITD) and 75–84 (PDSATPKPSL). 3 disordered regions span residues 1–27 (MSPP…VAQR), 65–84 (PQSV…KPSL), and 219–239 (EVPN…TKQP). Residues 12–38 (TDANERRKAQNRVAQRNYRSRQKLRVE) are basic DNA-binding region. 4 ANK repeats span residues 241-270 (EFKT…NIDT), 274-303 (HGRT…DLLM), 307-336 (SGVT…QQDR), and 357-386 (QNMT…DVNI).

It belongs to the bZIP family. Highly divergent.

It localises to the nucleus. Its function is as follows. Transcription factor that regulates the expression of the gene cluster that mediates the biosynthesis of apicidin F. Binds to the eight-base-pair motif 5'-TGACGTGA-3' called the 'Api-box' that is found in all promoters of the apicidin F cluster except in the promoter region of apf2 itself. This chain is Apicidin F cluster transcription factor apf2, found in Gibberella fujikuroi (strain CBS 195.34 / IMI 58289 / NRRL A-6831) (Bakanae and foot rot disease fungus).